Here is a 292-residue protein sequence, read N- to C-terminus: mRNA export protein 33 (292 aa).

The tract at residues 1 to 76 (MPPKKAAKGK…RKRREEEKRA (76 aa)) is disordered. Basic and acidic residues-rich tracts occupy residues 9–26 (GKGD…KKAA) and 58–76 (KDAK…EKRA). Residues 134–172 (INTDIVCKFFLEACETGKYGWLWQCPNGNMTCIYKHALP) form a C3H1-type zinc finger.

It localises to the cytoplasm. Functionally, functions as a component of the nuclear pore complex (NPC). NPC components, collectively referred to as nucleoporins (NUPs), can play the role of both NPC structural components and of docking or interaction partners for transiently associated nuclear transport factors. Active directional transport is assured by both, a Phe-Gly (FG) repeat affinity gradient for these transport factors across the NPC and a transport cofactor concentration gradient across the nuclear envelope. Involved in the export of mRNA from the nucleus to the cytoplasm. May play a role in mitotic spindle formation and/or function. The chain is mRNA export protein 33 (mep33) from Schizosaccharomyces pombe (strain 972 / ATCC 24843) (Fission yeast).